The chain runs to 567 residues: Thiol:disulfide interchange protein DsbD (567 aa).

The N-terminal stretch at 1–19 (MAQRIFTLILLLCSTSAFA) is a signal peptide. Disulfide bonds link C122–C128 and C185–C307. 7 consecutive transmembrane segments (helical) span residues 170 to 192 (ALWALLIGIGIAFTPCVLPMYPL), 212 to 234 (LAFIYVQGMALTYTALGLVVAAA), 246 to 268 (YVLIGLAIVFTLLALSMFGLFTL), 297 to 319 (GAIAGLICSPCTTAPLSAILLYI), 326 to 348 (WLGGGTLYLYALGMGLPLMLVTV), 358 to 380 (GPWMAHVKTAFGFVILALPVFLL), and 387 to 409 (AWGLRLWSLLGVAFFGWAFITSL). A Thioredoxin domain is found at 435-567 (QDWAFGSPSA…FSAHLHDRQP (133 aa)). C482 and C485 are oxidised to a cystine.

The protein belongs to the thioredoxin family. DsbD subfamily.

It is found in the cell inner membrane. It catalyses the reaction [protein]-dithiol + NAD(+) = [protein]-disulfide + NADH + H(+). The catalysed reaction is [protein]-dithiol + NADP(+) = [protein]-disulfide + NADPH + H(+). Functionally, required to facilitate the formation of correct disulfide bonds in some periplasmic proteins and for the assembly of the periplasmic c-type cytochromes. Acts by transferring electrons from cytoplasmic thioredoxin to the periplasm. This transfer involves a cascade of disulfide bond formation and reduction steps. The polypeptide is Thiol:disulfide interchange protein DsbD (Salmonella typhi).